The primary structure comprises 943 residues: Protein translocase subunit SecA (943 aa).

ATP-binding positions include Q90, 108–112 (GEGKT), and D509. A disordered region spans residues 535–560 (PNNEHKPPIPKQRSSKSKGGFSSKVG). Low complexity predominate over residues 551-560 (SKGGFSSKVG).

This sequence belongs to the SecA family. In terms of assembly, monomer and homodimer. Part of the essential Sec protein translocation apparatus which comprises SecA, SecYEG and auxiliary proteins SecDF. Other proteins may also be involved.

The protein localises to the cell inner membrane. It is found in the cellular thylakoid membrane. It localises to the cytoplasm. It carries out the reaction ATP + H2O + cellular proteinSide 1 = ADP + phosphate + cellular proteinSide 2.. In terms of biological role, part of the Sec protein translocase complex. Interacts with the SecYEG preprotein conducting channel. Has a central role in coupling the hydrolysis of ATP to the transfer of proteins into and across the cell membrane, serving as an ATP-driven molecular motor driving the stepwise translocation of polypeptide chains across the membrane. Probably participates in protein translocation into and across both the cytoplasmic and thylakoid membranes in cyanobacterial cells. The polypeptide is Protein translocase subunit SecA (Prochlorococcus marinus (strain MIT 9312)).